Consider the following 360-residue polypeptide: Phosphoserine aminotransferase (360 aa).

L-glutamate is bound at residue Arg-42. Pyridoxal 5'-phosphate-binding positions include 76–77 (AS), Trp-102, Thr-152, Asp-172, and Gln-195. An N6-(pyridoxal phosphate)lysine modification is found at Lys-196. 237–238 (NT) lines the pyridoxal 5'-phosphate pocket.

It belongs to the class-V pyridoxal-phosphate-dependent aminotransferase family. SerC subfamily. Homodimer. The cofactor is pyridoxal 5'-phosphate.

It is found in the cytoplasm. The enzyme catalyses O-phospho-L-serine + 2-oxoglutarate = 3-phosphooxypyruvate + L-glutamate. The catalysed reaction is 4-(phosphooxy)-L-threonine + 2-oxoglutarate = (R)-3-hydroxy-2-oxo-4-phosphooxybutanoate + L-glutamate. Its pathway is amino-acid biosynthesis; L-serine biosynthesis; L-serine from 3-phospho-D-glycerate: step 2/3. Functionally, catalyzes the reversible conversion of 3-phosphohydroxypyruvate to phosphoserine and of 3-hydroxy-2-oxo-4-phosphonooxybutanoate to phosphohydroxythreonine. This is Phosphoserine aminotransferase from Bacillus cereus (strain ATCC 14579 / DSM 31 / CCUG 7414 / JCM 2152 / NBRC 15305 / NCIMB 9373 / NCTC 2599 / NRRL B-3711).